We begin with the raw amino-acid sequence, 865 residues long: Protein translocase subunit SecA (865 aa).

Residues glutamine 93, glycine 111–threonine 115, and aspartate 501 contribute to the ATP site. 4 residues coordinate Zn(2+): cysteine 841, cysteine 843, cysteine 852, and cysteine 853.

Belongs to the SecA family. In terms of assembly, monomer and homodimer. Part of the essential Sec protein translocation apparatus which comprises SecA, SecYEG and auxiliary proteins SecDF-YajC and YidC. The cofactor is Zn(2+).

It is found in the cell inner membrane. It localises to the cytoplasm. The enzyme catalyses ATP + H2O + cellular proteinSide 1 = ADP + phosphate + cellular proteinSide 2.. Part of the Sec protein translocase complex. Interacts with the SecYEG preprotein conducting channel. Has a central role in coupling the hydrolysis of ATP to the transfer of proteins into and across the cell membrane, serving as an ATP-driven molecular motor driving the stepwise translocation of polypeptide chains across the membrane. The protein is Protein translocase subunit SecA of Helicobacter pylori (strain Shi470).